The following is a 407-amino-acid chain: 1-deoxy-D-xylulose 5-phosphate reductoisomerase (407 aa).

Positions 25, 26, 27, 28, 53, and 136 each coordinate NADPH. Lysine 137 is a binding site for 1-deoxy-D-xylulose 5-phosphate. An NADPH-binding site is contributed by glutamate 138. Residue aspartate 162 coordinates Mn(2+). The 1-deoxy-D-xylulose 5-phosphate site is built by serine 163, glutamate 164, serine 188, and histidine 211. Glutamate 164 provides a ligand contact to Mn(2+). NADPH is bound at residue glycine 217. Residues serine 224, asparagine 229, lysine 230, and glutamate 233 each coordinate 1-deoxy-D-xylulose 5-phosphate. Position 233 (glutamate 233) interacts with Mn(2+).

This sequence belongs to the DXR family. Requires Mg(2+) as cofactor. Mn(2+) serves as cofactor.

The enzyme catalyses 2-C-methyl-D-erythritol 4-phosphate + NADP(+) = 1-deoxy-D-xylulose 5-phosphate + NADPH + H(+). The protein operates within isoprenoid biosynthesis; isopentenyl diphosphate biosynthesis via DXP pathway; isopentenyl diphosphate from 1-deoxy-D-xylulose 5-phosphate: step 1/6. Its function is as follows. Catalyzes the NADPH-dependent rearrangement and reduction of 1-deoxy-D-xylulose-5-phosphate (DXP) to 2-C-methyl-D-erythritol 4-phosphate (MEP). The chain is 1-deoxy-D-xylulose 5-phosphate reductoisomerase from Bradyrhizobium diazoefficiens (strain JCM 10833 / BCRC 13528 / IAM 13628 / NBRC 14792 / USDA 110).